A 157-amino-acid polypeptide reads, in one-letter code: 3-hydroxybutyryl-CoA dehydratase (157 aa).

The MaoC-like domain maps to 22 to 120 (KKEISSSDVV…IPERRRARLA (99 aa)).

It catalyses the reaction (3R)-3-hydroxybutanoyl-CoA = (2E)-butenoyl-CoA + H2O. Its function is as follows. Involved in the regeneration of glyoxylate from a molecule of acetyl-CoA. The protein is 3-hydroxybutyryl-CoA dehydratase of Methylorubrum extorquens (strain ATCC 14718 / DSM 1338 / JCM 2805 / NCIMB 9133 / AM1) (Methylobacterium extorquens).